Here is a 4924-residue protein sequence, read N- to C-terminus: Hydroxamate-type ferrichrome siderophore peptide synthetase (4924 aa).

Carrier domains lie at 715 to 791, 2172 to 2246, 3254 to 3328, and 4402 to 4478; these read NQSE…ILLK, DGFQ…KRRR, NVVE…NTQT, and IHLN…QYEK. Residues S752, S2206, S3288, and S4439 each carry the O-(pantetheine 4'-phosphoryl)serine modification.

The protein belongs to the ATP-dependent AMP-binding enzyme family.

The protein resides in the cytoplasm. In terms of biological role, involved in intracellular and extracellular ferrichrome siderophore biosynthesis. In Schizosaccharomyces pombe (strain 972 / ATCC 24843) (Fission yeast), this protein is Hydroxamate-type ferrichrome siderophore peptide synthetase (sib1).